The following is a 1304-amino-acid chain: NAD-dependent protein deacetylase Sir2B (1304 aa).

Residues 28–466 form the Deacetylase sirtuin-type domain; it reads TEEEKKKVKE…LISIHNIKMK (439 aa). NAD(+)-binding positions include 53 to 72 and 274 to 277; these read GAGI…TGIW and QNID. The Proton acceptor role is filled by histidine 294. Zn(2+)-binding residues include cysteine 302, cysteine 305, cysteine 327, and cysteine 330. NAD(+)-binding positions include 371–373, 399–401, and valine 417; these read GSS and NYQ. 3 disordered regions span residues 545–585, 749–827, and 1154–1203; these read EHNN…SSSI, KVKS…DKDN, and EIKY…DDNN. Low complexity-rich tracts occupy residues 548 to 585, 756 to 806, and 1182 to 1203; these read NNNN…SSSI, NNNN…ISDH, and DDNN…DDNN.

Belongs to the sirtuin family. Class IV subfamily. Requires Zn(2+) as cofactor.

The catalysed reaction is N(6)-acetyl-L-lysyl-[protein] + NAD(+) + H2O = 2''-O-acetyl-ADP-D-ribose + nicotinamide + L-lysyl-[protein]. Functionally, regulates the expression of the surface antigen-coding var genes central to the malaria pathogenesis. Cooperates with Sir2A to mediate silencing and mutual exclusive expression of only 1 of the 60 subtelomeric var genes at a time, coding for functionally different but epitopically variant versions of the erythrocyte membrane protein 1 (PfEMP1) molecule, to evade the detection by host immune surveillance. The sequence is that of NAD-dependent protein deacetylase Sir2B from Plasmodium falciparum (isolate 3D7).